A 66-amino-acid chain; its full sequence is uncharacterized protein (66 aa).

Belongs to the YeeT/YkfH/YpjJ family.

This is an uncharacterized protein from Escherichia coli (strain K12).